We begin with the raw amino-acid sequence, 371 residues long: Carbamoyl phosphate synthase small chain (371 aa).

The tract at residues 1–190 is CPSase; sequence MRKTAILALE…LYRENEKPLV (190 aa). L-glutamine contacts are provided by Ser-47, Gly-237, and Gly-239. Residues 189–371 enclose the Glutamine amidotransferase type-1 domain; it reads LVAVIDFGVK…FKEFVKMAQG (183 aa). Catalysis depends on Cys-264, which acts as the Nucleophile. Positions 265, 268, 306, and 309 each coordinate L-glutamine. Residues His-348 and Glu-350 contribute to the active site.

The protein belongs to the CarA family. As to quaternary structure, composed of two chains; the small (or glutamine) chain promotes the hydrolysis of glutamine to ammonia, which is used by the large (or ammonia) chain to synthesize carbamoyl phosphate. Tetramer of heterodimers (alpha,beta)4.

It carries out the reaction hydrogencarbonate + L-glutamine + 2 ATP + H2O = carbamoyl phosphate + L-glutamate + 2 ADP + phosphate + 2 H(+). The catalysed reaction is L-glutamine + H2O = L-glutamate + NH4(+). Its pathway is amino-acid biosynthesis; L-arginine biosynthesis; carbamoyl phosphate from bicarbonate: step 1/1. It functions in the pathway pyrimidine metabolism; UMP biosynthesis via de novo pathway; (S)-dihydroorotate from bicarbonate: step 1/3. Its function is as follows. Small subunit of the glutamine-dependent carbamoyl phosphate synthetase (CPSase). CPSase catalyzes the formation of carbamoyl phosphate from the ammonia moiety of glutamine, carbonate, and phosphate donated by ATP, constituting the first step of 2 biosynthetic pathways, one leading to arginine and/or urea and the other to pyrimidine nucleotides. The small subunit (glutamine amidotransferase) binds and cleaves glutamine to supply the large subunit with the substrate ammonia. This chain is Carbamoyl phosphate synthase small chain, found in Aquifex aeolicus (strain VF5).